The following is a 793-amino-acid chain: DnaJ homolog subfamily C member 10 (793 aa).

The signal sequence occupies residues 1–32; the sequence is MGVWLNKDDYIRDLKRIILCFLIVYMAILVGT. In terms of domain architecture, J spans 35-100; sequence DFYSLLGVSK…DLRKKYDKYG (66 aa). The region spanning 130-232 is the Thioredoxin 1 domain; the sequence is EIITLERREF…ESLVSFAMQH (103 aa). C158 and C161 form a disulfide bridge. Trxb regions lie at residues 235-350 and 348-463; these read STVT…LPDF and PDFE…PQNF. Thioredoxin domains lie at 454 to 553, 557 to 662, and 671 to 778; these read HVTT…IEDL, SVVS…SLRI, and VSTD…ISEK. The cysteines at positions 480 and 483 are disulfide-linked. N530 is a glycosylation site (N-linked (GlcNAc...) asparagine). Disulfide bonds link C588-C591 and C700-C703. The short motif at 790–793 is the Prevents secretion from ER element; it reads KDEL.

Interacts with EDEM1. Interacts with HSPA5 (via its J domain).

The protein localises to the endoplasmic reticulum lumen. Functionally, endoplasmic reticulum disulfide reductase involved both in the correct folding of proteins and degradation of misfolded proteins. Required for efficient folding of proteins in the endoplasmic reticulum by catalyzing the removal of non-native disulfide bonds formed during the folding of proteins, such as LDLR. Also involved in endoplasmic reticulum-associated degradation (ERAD) by reducing incorrect disulfide bonds in misfolded glycoproteins recognized by EDEM1. Interaction with HSPA5 is required its activity, not for the disulfide reductase activity, but to facilitate the release of DNAJC10 from its substrate. Promotes apoptotic signaling pathway in response to endoplasmic reticulum stress. The chain is DnaJ homolog subfamily C member 10 (DNAJC10) from Homo sapiens (Human).